Consider the following 535-residue polypeptide: CTP synthase (535 aa).

The interval 1–267 (MTKYIFVTGG…DQIVCDHLKL (267 aa)) is amidoligase domain. Serine 13 is a CTP binding site. Serine 13 is a binding site for UTP. 14 to 19 (SLGKGI) provides a ligand contact to ATP. Tyrosine 54 contributes to the L-glutamine binding site. An ATP-binding site is contributed by aspartate 71. The Mg(2+) site is built by aspartate 71 and glutamate 141. Residues 148–150 (DIE), 188–193 (KTKPTQ), and lysine 224 contribute to the CTP site. Residues 188 to 193 (KTKPTQ) and lysine 224 contribute to the UTP site. 240 to 242 (RDA) contributes to the ATP binding site. The Glutamine amidotransferase type-1 domain occupies 292 to 534 (KIALVGKYVE…VRASITNKES (243 aa)). Glycine 354 is an L-glutamine binding site. Cysteine 381 serves as the catalytic Nucleophile; for glutamine hydrolysis. Residues 382-385 (LGMQ), glutamate 405, and arginine 462 each bind L-glutamine. Catalysis depends on residues histidine 507 and glutamate 509.

Belongs to the CTP synthase family. As to quaternary structure, homotetramer.

The enzyme catalyses UTP + L-glutamine + ATP + H2O = CTP + L-glutamate + ADP + phosphate + 2 H(+). It carries out the reaction L-glutamine + H2O = L-glutamate + NH4(+). The catalysed reaction is UTP + NH4(+) + ATP = CTP + ADP + phosphate + 2 H(+). Its pathway is pyrimidine metabolism; CTP biosynthesis via de novo pathway; CTP from UDP: step 2/2. With respect to regulation, allosterically activated by GTP, when glutamine is the substrate; GTP has no effect on the reaction when ammonia is the substrate. The allosteric effector GTP functions by stabilizing the protein conformation that binds the tetrahedral intermediate(s) formed during glutamine hydrolysis. Inhibited by the product CTP, via allosteric rather than competitive inhibition. In terms of biological role, catalyzes the ATP-dependent amination of UTP to CTP with either L-glutamine or ammonia as the source of nitrogen. Regulates intracellular CTP levels through interactions with the four ribonucleotide triphosphates. This chain is CTP synthase, found in Bacillus cereus (strain AH187).